A 334-amino-acid chain; its full sequence is Geminin coiled-coil domain-containing protein 1 (334 aa).

Positions 82-119 (SQLYRNKQLQDTLVQKEEELARLHEENNHLRQYLNSAL) form a coiled coil. Residues 143 to 167 (FRKGKRKSKEQRYSPAEIPHPKNAK) are disordered.

It belongs to the GEMC1 family. In terms of processing, highly phosphorylated by CDK2; stimulates initiation of DNA replication.

The protein localises to the nucleus. Regulator of DNA replication. Promotes initiation of chromosomal DNA replication by mediating TOPBP1- and CDK2-dependent recruitment of CDC45L onto replication origins. The protein is Geminin coiled-coil domain-containing protein 1 (GMNC) of Homo sapiens (Human).